A 121-amino-acid polypeptide reads, in one-letter code: Putative iron-sulfur cluster insertion protein ErpA (121 aa).

Positions 49, 113, and 115 each coordinate iron-sulfur cluster.

It belongs to the HesB/IscA family. In terms of assembly, homodimer. The cofactor is iron-sulfur cluster.

Functionally, required for insertion of 4Fe-4S clusters. The chain is Putative iron-sulfur cluster insertion protein ErpA from Methylibium petroleiphilum (strain ATCC BAA-1232 / LMG 22953 / PM1).